We begin with the raw amino-acid sequence, 128 residues long: MTGFRDQLGVHAQALVLRETRNNLLTSNIANAATPHYKARDIDFGAELARASGNGTLRTTEARHFAAGGPAARGEALYRDPVSPSLDGNTVEMAVEQMEFAENTLRYQTSLALLNRRISGLMTAIKGE.

Belongs to the flagella basal body rod proteins family. As to quaternary structure, the basal body constitutes a major portion of the flagellar organelle and consists of a number of rings mounted on a central rod. In Gram-negative bacteria, at least four rings, L, P, S and M are present, whereas Gram-positive bacteria lack the L and P rings. The rod consists of about 26 subunits of FlgG in the distal portion, and FlgB, FlgC and FlgF build up the proximal portion of the rod with about 6 subunits each. Rod assembly occurs by export via the flagellum-specific pathway of its constituent proteins and by their incorporation into the rod structure in the probable order of FlgB, FlgC, FlgF and FlgG. Another protein, FliE, also assembles onto the stable rod structure.

Its subcellular location is the bacterial flagellum basal body. Functionally, structural component of flagellum, the bacterial motility apparatus. Part of the rod structure of flagellar basal body. The protein is Flagellar basal body rod protein FlgB of Cereibacter sphaeroides (strain ATCC 17029 / ATH 2.4.9) (Rhodobacter sphaeroides).